The primary structure comprises 1377 residues: DNA-directed RNA polymerase subunit beta' (1377 aa).

Zn(2+) contacts are provided by C70, C72, C85, and C88. The Mg(2+) site is built by D460, D462, and D464. C808, C882, C889, and C892 together coordinate Zn(2+).

Belongs to the RNA polymerase beta' chain family. The RNAP catalytic core consists of 2 alpha, 1 beta, 1 beta' and 1 omega subunit. When a sigma factor is associated with the core the holoenzyme is formed, which can initiate transcription. It depends on Mg(2+) as a cofactor. Zn(2+) serves as cofactor.

The enzyme catalyses RNA(n) + a ribonucleoside 5'-triphosphate = RNA(n+1) + diphosphate. Its function is as follows. DNA-dependent RNA polymerase catalyzes the transcription of DNA into RNA using the four ribonucleoside triphosphates as substrates. The polypeptide is DNA-directed RNA polymerase subunit beta' (Geotalea uraniireducens (strain Rf4) (Geobacter uraniireducens)).